The following is a 109-amino-acid chain: Spermidine export protein MdtI (109 aa).

4 helical membrane-spanning segments follow: residues W6–L26, C36–V56, A64–F84, and L88–F108.

The protein belongs to the drug/metabolite transporter (DMT) superfamily. Small multidrug resistance (SMR) (TC 2.A.7.1) family. MdtI subfamily. Forms a complex with MdtJ.

The protein resides in the cell inner membrane. Catalyzes the excretion of spermidine. In Salmonella paratyphi A (strain ATCC 9150 / SARB42), this protein is Spermidine export protein MdtI.